The chain runs to 290 residues: Fructose-1,6-bisphosphatase class 1 (290 aa).

Residues Glu78, Asp96, Leu98, and Asp99 each contribute to the Mg(2+) site. Substrate contacts are provided by residues 99-102, Tyr201, and Lys226; that span reads DGSS. Position 232 (Glu232) interacts with Mg(2+).

It belongs to the FBPase class 1 family. In terms of assembly, homotetramer. Mg(2+) is required as a cofactor.

The protein localises to the cytoplasm. It carries out the reaction beta-D-fructose 1,6-bisphosphate + H2O = beta-D-fructose 6-phosphate + phosphate. It functions in the pathway carbohydrate biosynthesis; gluconeogenesis. This chain is Fructose-1,6-bisphosphatase class 1, found in Helicobacter pylori (strain J99 / ATCC 700824) (Campylobacter pylori J99).